The sequence spans 439 residues: Sodium-dependent phosphate transport protein 3 (439 aa).

Residues Asn47, Asn56, Asn68, and Asn69 are each glycosylated (N-linked (GlcNAc...) asparagine). 9 consecutive transmembrane segments (helical) span residues Ile98 to Ala118, Ser130 to Val150, Thr183 to Ile203, Phe211 to Ile231, Leu273 to Leu293, Leu317 to Leu337, Leu350 to Val369, Val374 to Ile396, and Gly415 to Val435.

It belongs to the major facilitator superfamily. Sodium/anion cotransporter family. As to expression, expressed in the small intestine, kidney, spleen and testis. Not detected in fetal brain, bone marrow, and mammary gland.

It is found in the apical cell membrane. It carries out the reaction 3 Na(+)(out) + phosphate(out) = 3 Na(+)(in) + phosphate(in). It catalyses the reaction urate(out) + n chloride(in) = urate(in) + n chloride(out). In terms of biological role, acts as a membrane potential-dependent organic anion transporter, the transport requires a low concentration of chloride ions. Mediates chloride-dependent transport of urate. Can actively transport inorganic phosphate into cells via Na(+) cotransport. The sequence is that of Sodium-dependent phosphate transport protein 3 (SLC17A2) from Homo sapiens (Human).